Reading from the N-terminus, the 354-residue chain is DNA polymerase IV (354 aa).

The UmuC domain occupies 8 to 189 (IIHVDMDCFY…LPLEKIPGVG (182 aa)). Positions 12 and 107 each coordinate Mg(2+). Glutamate 108 is a catalytic residue.

Belongs to the DNA polymerase type-Y family. Monomer. The cofactor is Mg(2+).

Its subcellular location is the cytoplasm. The catalysed reaction is DNA(n) + a 2'-deoxyribonucleoside 5'-triphosphate = DNA(n+1) + diphosphate. In terms of biological role, poorly processive, error-prone DNA polymerase involved in untargeted mutagenesis. Copies undamaged DNA at stalled replication forks, which arise in vivo from mismatched or misaligned primer ends. These misaligned primers can be extended by PolIV. Exhibits no 3'-5' exonuclease (proofreading) activity. May be involved in translesional synthesis, in conjunction with the beta clamp from PolIII. The polypeptide is DNA polymerase IV (Vibrio parahaemolyticus serotype O3:K6 (strain RIMD 2210633)).